A 242-amino-acid polypeptide reads, in one-letter code: Pyridoxine 5'-phosphate synthase (242 aa).

A 3-amino-2-oxopropyl phosphate-binding site is contributed by N6. 8–9 (DH) contributes to the 1-deoxy-D-xylulose 5-phosphate binding site. R17 contributes to the 3-amino-2-oxopropyl phosphate binding site. Catalysis depends on H42, which acts as the Proton acceptor. 1-deoxy-D-xylulose 5-phosphate contacts are provided by R44 and H49. E69 serves as the catalytic Proton acceptor. T99 lines the 1-deoxy-D-xylulose 5-phosphate pocket. The Proton donor role is filled by H193. Residues G194 and 217–218 (GH) contribute to the 3-amino-2-oxopropyl phosphate site.

Belongs to the PNP synthase family. As to quaternary structure, homooctamer; tetramer of dimers.

The protein localises to the cytoplasm. The enzyme catalyses 3-amino-2-oxopropyl phosphate + 1-deoxy-D-xylulose 5-phosphate = pyridoxine 5'-phosphate + phosphate + 2 H2O + H(+). It functions in the pathway cofactor biosynthesis; pyridoxine 5'-phosphate biosynthesis; pyridoxine 5'-phosphate from D-erythrose 4-phosphate: step 5/5. Its function is as follows. Catalyzes the complicated ring closure reaction between the two acyclic compounds 1-deoxy-D-xylulose-5-phosphate (DXP) and 3-amino-2-oxopropyl phosphate (1-amino-acetone-3-phosphate or AAP) to form pyridoxine 5'-phosphate (PNP) and inorganic phosphate. This is Pyridoxine 5'-phosphate synthase from Aquifex aeolicus (strain VF5).